The primary structure comprises 264 residues: Teichoic acids export ATP-binding protein TagH (264 aa).

Residues 22 to 243 enclose the ABC transporter domain; the sequence is ERLKDVIVPF…YEKFLNDFKK (222 aa). Residue 57–64 coordinates ATP; the sequence is GINGSGKS.

Belongs to the ABC transporter superfamily. Teichoic acids exporter (TC 3.A.1.104.1) family. In terms of assembly, the complex is composed of two ATP-binding proteins (TagH) and two transmembrane proteins (TagG).

The protein localises to the cell membrane. The enzyme catalyses ATP + H2O + teichoic acidSide 1 = ADP + phosphate + teichoic acidSide 2.. Part of the ABC transporter complex TagGH involved in teichoic acids export. Responsible for energy coupling to the transport system. This Staphylococcus saprophyticus subsp. saprophyticus (strain ATCC 15305 / DSM 20229 / NCIMB 8711 / NCTC 7292 / S-41) protein is Teichoic acids export ATP-binding protein TagH.